A 514-amino-acid polypeptide reads, in one-letter code: Cilia- and flagella-associated protein 53 (514 aa).

Coiled-coil stretches lie at residues 91–176 (VINT…EKKV) and 205–478 (WEED…AGLA). 2 disordered regions span residues 261–296 (QNKAQIKREDEQEKLQKQKRRQETRSSLKKAVQDKI) and 495–514 (QALSQNVHPMRRGYPDKPPL).

Belongs to the CFAP53 family. In terms of assembly, microtubule inner protein component of sperm flagellar doublet microtubules. Interacts with PIERCE1 and PIERCE2; the interactions link outer dynein arms docking complex (ODA-DC) to the internal microtubule inner proteins (MIP) in cilium axoneme. Interacts with CCDC38. Interacts with CCDC42 and IFT88. Interacts with centriolar satellite proteins PIBF1/CEP90 and PCM1. Interacts with dyneins DNAIC1, DNAIC2 AND DNAH11 and with ODA-DC component ODAD4/TTC25. Expressed predominantly in testis (at protein level). In embryos at 8 dpc, specifically expressed in the node, in particular within the pit cells that are located at the center of the node and have rotating monocilia on their apical surface. In the adult, expressed in epithelial cells of the trachea, brain ventricles, oviduct and testis.

It is found in the cytoplasm. The protein resides in the cytoskeleton. Its subcellular location is the cilium axoneme. The protein localises to the flagellum axoneme. It localises to the microtubule organizing center. It is found in the centrosome. The protein resides in the centriolar satellite. Its subcellular location is the spindle pole. Its function is as follows. Microtubule inner protein (MIP) part of the dynein-decorated doublet microtubules (DMTs) in cilia axoneme, which is required for motile cilia beating. Regulates motility patterns of both 9+0 and 9+2 motile cilia through differential localization and recruitment of axonemal dynein components. Required for centriolar satellite integrity and non-motile cilium assembly. Required for motile cilium formation. Through its role in the beating of primary cilia, involved in the establishment of organ laterality during embryogenesis. Required for sperm flagellum biogenesis and is essential for male fertility. The chain is Cilia- and flagella-associated protein 53 from Mus musculus (Mouse).